A 345-amino-acid chain; its full sequence is S-adenosylmethionine:tRNA ribosyltransferase-isomerase (345 aa).

The protein belongs to the QueA family. As to quaternary structure, monomer.

The protein resides in the cytoplasm. It catalyses the reaction 7-aminomethyl-7-carbaguanosine(34) in tRNA + S-adenosyl-L-methionine = epoxyqueuosine(34) in tRNA + adenine + L-methionine + 2 H(+). It participates in tRNA modification; tRNA-queuosine biosynthesis. In terms of biological role, transfers and isomerizes the ribose moiety from AdoMet to the 7-aminomethyl group of 7-deazaguanine (preQ1-tRNA) to give epoxyqueuosine (oQ-tRNA). The protein is S-adenosylmethionine:tRNA ribosyltransferase-isomerase of Lactococcus lactis subsp. lactis (strain IL1403) (Streptococcus lactis).